We begin with the raw amino-acid sequence, 360 residues long: Chorismate synthase (360 aa).

Residues Arg-48 and Arg-54 each contribute to the NADP(+) site. Residues 125-127 (RSS), 242-243 (NG), Gly-283, 298-302 (KPTSS), and Arg-324 each bind FMN.

Belongs to the chorismate synthase family. In terms of assembly, homotetramer. Requires FMNH2 as cofactor.

The catalysed reaction is 5-O-(1-carboxyvinyl)-3-phosphoshikimate = chorismate + phosphate. Its pathway is metabolic intermediate biosynthesis; chorismate biosynthesis; chorismate from D-erythrose 4-phosphate and phosphoenolpyruvate: step 7/7. Catalyzes the anti-1,4-elimination of the C-3 phosphate and the C-6 proR hydrogen from 5-enolpyruvylshikimate-3-phosphate (EPSP) to yield chorismate, which is the branch point compound that serves as the starting substrate for the three terminal pathways of aromatic amino acid biosynthesis. This reaction introduces a second double bond into the aromatic ring system. In Gluconobacter oxydans (strain 621H) (Gluconobacter suboxydans), this protein is Chorismate synthase.